We begin with the raw amino-acid sequence, 246 residues long: tRNA (guanine-N(1)-)-methyltransferase (246 aa).

Residues glycine 113 and 132-137 (LGDFVV) each bind S-adenosyl-L-methionine.

Belongs to the RNA methyltransferase TrmD family. As to quaternary structure, homodimer.

The protein resides in the cytoplasm. The enzyme catalyses guanosine(37) in tRNA + S-adenosyl-L-methionine = N(1)-methylguanosine(37) in tRNA + S-adenosyl-L-homocysteine + H(+). Specifically methylates guanosine-37 in various tRNAs. This is tRNA (guanine-N(1)-)-methyltransferase from Latilactobacillus sakei subsp. sakei (strain 23K) (Lactobacillus sakei subsp. sakei).